The sequence spans 951 residues: Kinase suppressor of Ras 2 (951 aa).

Residues 237–298 (PPPPPLESGH…PGTPPPSSRK (62 aa)) are disordered. A compositionally biased stretch (low complexity) spans 260-274 (RTPPRTPNIVTTVTP). Phosphothreonine occurs at positions 273 and 277. The segment at 413-457 (KHRFSTKYWMSQTCTVCGKGMLFGLKCKNCKLKCHNKCTKEAPPC) adopts a Phorbol-ester/DAG-type zinc-finger fold. Zn(2+) is bound by residues histidine 414, cysteine 426, cysteine 429, cysteine 439, cysteine 442, histidine 447, cysteine 450, and cysteine 457. The residue at position 475 (serine 475) is a Phosphoserine; by MARK3. Disordered stretches follow at residues 489–559 (RYSD…QKKN) and 614–634 (EPTS…DEFE). Residues 494-503 (HISQTLPKTN) are compositionally biased toward polar residues. Residue threonine 498 is modified to Phosphothreonine. A compositionally biased stretch (low complexity) spans 518-531 (SSSNPSSTTSSTPS). Positions 532–552 (SPAPPLPPSATPPSPLHPSPQ) are enriched in pro residues. One can recognise a Protein kinase domain in the interval 667 to 932 (LEIGELIGKG…TKLMDMLEKL (266 aa)). 673-681 (IGKGRFGQV) is a binding site for ATP. Aspartate 787 functions as the Proton donor/acceptor in the catalytic mechanism. The ATP site is built by lysine 789 and aspartate 804.

It belongs to the protein kinase superfamily. TKL Ser/Thr protein kinase family. As to quaternary structure, heterodimerizes (via N-terminus) with BRAF (via N-terminus) in a MAP2K1/MEK1-dependent manner. Interacts with BRAF; this increases the low intrinsic protein kinase activity of KSR2. Interacts with MAP2K1, forming a heterodimer that can dimerize to form a heterotetramer. Interacts with MAP3K8, MAPK, RAS and RAF. Post-translationally, phosphorylated on Ser-475 by MARK3.

It is found in the cytoplasm. The protein resides in the membrane. It catalyses the reaction L-seryl-[protein] + ATP = O-phospho-L-seryl-[protein] + ADP + H(+). The enzyme catalyses L-threonyl-[protein] + ATP = O-phospho-L-threonyl-[protein] + ADP + H(+). In terms of biological role, location-regulated scaffold connecting MEK to RAF. Has very low protein kinase activity and can phosphorylate MAP2K1 at several Ser and Thr residues with very low efficiency (in vitro). Acts as MAP2K1/MEK1-dependent allosteric activator of BRAF; upon binding to MAP2K1/MEK1, dimerizes with BRAF and promotes BRAF-mediated phosphorylation of MAP2K1/MEK1. Interaction with BRAF enhances KSR2-mediated phosphorylation of MAP2K1 (in vitro). Blocks MAP3K8 kinase activity and MAP3K8-mediated signaling. Acts as a negative regulator of MAP3K3-mediated activation of ERK, JNK and NF-kappa-B pathways, inhibiting MAP3K3-mediated interleukin-8 production. The polypeptide is Kinase suppressor of Ras 2 (Mus musculus (Mouse)).